The sequence spans 284 residues: Pantothenate synthetase (284 aa).

Residue 32–39 (MGALHDGH) coordinates ATP. Catalysis depends on histidine 39, which acts as the Proton donor. Residue glutamine 63 participates in (R)-pantoate binding. Glutamine 63 provides a ligand contact to beta-alanine. 149 to 152 (GEKD) contributes to the ATP binding site. Position 155 (glutamine 155) interacts with (R)-pantoate. ATP is bound by residues isoleucine 178 and 186 to 189 (MSSR).

Belongs to the pantothenate synthetase family. Homodimer.

The protein resides in the cytoplasm. It catalyses the reaction (R)-pantoate + beta-alanine + ATP = (R)-pantothenate + AMP + diphosphate + H(+). The protein operates within cofactor biosynthesis; (R)-pantothenate biosynthesis; (R)-pantothenate from (R)-pantoate and beta-alanine: step 1/1. In terms of biological role, catalyzes the condensation of pantoate with beta-alanine in an ATP-dependent reaction via a pantoyl-adenylate intermediate. This chain is Pantothenate synthetase, found in Roseobacter denitrificans (strain ATCC 33942 / OCh 114) (Erythrobacter sp. (strain OCh 114)).